A 2521-amino-acid chain; its full sequence is Piezo-type mechanosensitive ion channel component 1 (2521 aa).

Over Met-1–Trp-12 the chain is Cytoplasmic. The chain crosses the membrane as a helical span at residues Leu-13–Leu-25. At Arg-26–Ser-28 the chain is on the extracellular side. The helical transmembrane segment at Gly-29–Phe-44 threads the bilayer. Topologically, residues Pro-45 to Arg-58 are cytoplasmic. The helical transmembrane segment at Leu-59–Leu-81 threads the bilayer. At His-82–Leu-121 the chain is on the extracellular side. A helical membrane pass occupies residues Val-122 to Ile-138. At Cys-139 to Trp-194 the chain is on the cytoplasmic side. A helical membrane pass occupies residues Leu-195 to Ala-214. Residues His-215–Pro-216 lie on the Extracellular side of the membrane. A helical transmembrane segment spans residues Ser-217–Cys-236. Over His-237–Arg-247 the chain is Cytoplasmic. A helical membrane pass occupies residues Leu-248–Met-268. The Extracellular portion of the chain corresponds to Pro-269–Asp-309. N-linked (GlcNAc...) asparagine glycosylation occurs at Asn-295. The chain crosses the membrane as a helical span at residues Trp-310–Arg-330. Residues Lys-331 to His-417 lie on the Cytoplasmic side of the membrane. The chain crosses the membrane as a helical span at residues Leu-418 to Tyr-438. The Extracellular segment spans residues His-439 to Ser-440. Residues Trp-441 to Val-456 form a helical membrane-spanning segment. Topologically, residues Arg-457–Gln-461 are cytoplasmic. The chain crosses the membrane as a helical span at residues Leu-462–Trp-484. At Ala-485–Pro-512 the chain is on the extracellular side. Residues Cys-513–Leu-530 form a helical membrane-spanning segment. Residues Arg-531 to Gly-574 are Cytoplasmic-facing. Residues Val-575 to Gly-595 traverse the membrane as a helical segment. Residue Arg-596 is a topological domain, extracellular. The helical transmembrane segment at Leu-597–Val-617 threads the bilayer. Residues Tyr-618–Lys-627 lie on the Cytoplasmic side of the membrane. The helical transmembrane segment at Ala-628–Phe-649 threads the bilayer. Residues Gln-650–Glu-679 are Extracellular-facing. A helical membrane pass occupies residues Leu-680–Leu-696. Over Gln-697–Lys-816 the chain is Cytoplasmic. Thr-734 is subject to Phosphothreonine. The tract at residues Arg-738–His-769 is disordered. Positions Gln-749–Arg-759 are enriched in acidic residues. Ser-758 is subject to Phosphoserine. The helical transmembrane segment at Leu-817–Lys-828 threads the bilayer. Over Glu-829–Ser-831 the chain is Extracellular. A helical membrane pass occupies residues Val-832–Leu-845. At Pro-846–Thr-859 the chain is on the cytoplasmic side. The chain crosses the membrane as a helical span at residues Val-860–Leu-874. Residues Lys-875–Leu-926 are Extracellular-facing. A helical transmembrane segment spans residues Gly-927–Arg-954. Residues Gln-955–Phe-994 lie on the Cytoplasmic side of the membrane. A helical transmembrane segment spans residues Gly-995 to Arg-1010. The Extracellular portion of the chain corresponds to Met-1011–Asn-1012. A helical membrane pass occupies residues Phe-1013–Arg-1028. Topologically, residues Arg-1029–Tyr-1041 are cytoplasmic. Residues Cys-1042–Leu-1057 form a helical membrane-spanning segment. Residues Gly-1058–Ser-1096 are Extracellular-facing. Residues Thr-1097–Ala-1118 form a helical membrane-spanning segment. Residues Glu-1119–Ser-1153 lie on the Cytoplasmic side of the membrane. Residues Tyr-1154–Thr-1180 traverse the membrane as a helical segment. At Arg-1181–Phe-1185 the chain is on the extracellular side. Residues Gly-1186–Leu-1204 traverse the membrane as a helical segment. At Gln-1205–Cys-1217 the chain is on the cytoplasmic side. The chain crosses the membrane as a helical span at residues Leu-1218–Ala-1236. Residues Cys-1237 to Ile-1285 lie on the Extracellular side of the membrane. The chain crosses the membrane as a helical span at residues Ile-1286 to Phe-1302. The Cytoplasmic portion of the chain corresponds to Leu-1303–Ile-1656. Residues His-1339–Arg-1368 adopt a coiled-coil conformation. 3 disordered regions span residues Arg-1356–Trp-1402, Arg-1462–Ala-1498, and Thr-1576–Glu-1630. The span at Leu-1385–Pro-1398 shows a compositional bias: low complexity. Residues Ser-1391 and Ser-1396 each carry the phosphoserine modification. 2 positions are modified to phosphoserine: Ser-1636 and Ser-1646. Residues Pro-1657–Met-1700 form a helical membrane-spanning segment. Topologically, residues Val-1701–Ser-1704 are extracellular. Residues Ala-1705 to Leu-1720 traverse the membrane as a helical segment. Over Ser-1721–Arg-1728 the chain is Cytoplasmic. The helical transmembrane segment at Phe-1729–Phe-1747 threads the bilayer. Over Gln-1748 to Thr-1779 the chain is Extracellular. Residues Asp-1780 to Leu-1801 form a helical membrane-spanning segment. Over Cys-1802–Val-1960 the chain is Cytoplasmic. Basic and acidic residues predominate over residues Asp-1811–Glu-1822. A disordered region spans residues Asp-1811–Arg-1921. At Thr-1854 the chain carries Phosphothreonine. Residues Val-1859–Arg-1868 show a composition bias toward basic and acidic residues. Positions Ile-1869–Lys-1878 are enriched in basic residues. Residues Glu-1890–Lys-1903 are compositionally biased toward acidic residues. Over residues Glu-1904 to Pro-1913 the composition is skewed to basic and acidic residues. A helical membrane pass occupies residues Tyr-1961 to Trp-1980. The Extracellular segment spans residues Ala-1981–Val-2000. Residues Pro-2001–Val-2017 form a helical membrane-spanning segment. The Cytoplasmic segment spans residues Asp-2018–Leu-2031. A helical membrane pass occupies residues Ala-2032–Val-2052. Residues Thr-2053–Asn-2060 are Extracellular-facing. Residues Val-2061–Leu-2076 traverse the membrane as a helical segment. Over Ser-2077–Gly-2176 the chain is Cytoplasmic. Residues Gly-2177 to Val-2197 traverse the membrane as a helical segment. Residues Arg-2198–Ser-2431 are Extracellular-facing. Asn-2294 is a glycosylation site (N-linked (GlcNAc...) asparagine). Cys-2411 and Cys-2415 form a disulfide bridge. A helical membrane pass occupies residues Leu-2432–Gly-2452. The Cytoplasmic portion of the chain corresponds to Lys-2453–Glu-2521.

Belongs to the PIEZO (TC 1.A.75) family. In terms of assembly, homotrimer; the homotrimer forms a propeller-shaped Piezo channel with a cation-ion conducting pore. Heterotrimeric interaction may occur between PIEZO1 and PIEZO2. Interacts with PKD2. Interacts with STOML3. Interacts with TMC1, TMC2, PCDH15 and CIB2; the interaction may be part of the MET complex. Interacts with MDFIC (via C-terminus); the interaction prolongs Piezo channel inactivation. Interacts with MDFI (via C-terminus); the interaction prolongs Piezo channel inactivation. Expressed in numerous tissues. In normal brain, expressed exclusively in neurons, not in astrocytes. In Alzheimer disease brains, expressed in about half of the activated astrocytes located around classical senile plaques. In Parkinson disease substantia nigra, not detected in melanin-containing neurons nor in activated astrocytes. Expressed in erythrocytes (at protein level). Expressed in myoblasts (at protein level).

It is found in the endoplasmic reticulum membrane. Its subcellular location is the endoplasmic reticulum-Golgi intermediate compartment membrane. The protein localises to the cell membrane. It localises to the cell projection. The protein resides in the lamellipodium membrane. It catalyses the reaction K(+)(in) = K(+)(out). The enzyme catalyses Na(+)(in) = Na(+)(out). It carries out the reaction Ca(2+)(in) = Ca(2+)(out). The catalysed reaction is Mg(2+)(in) = Mg(2+)(out). With respect to regulation, regulated by auxillary subunits MDFIC and MDFI. Down-regulated by phosphatidylserines exposed on the cell surface. Divalent ions decrease the single-channel permeability of K(+). Its function is as follows. Pore-forming subunit of the mechanosensitive non-specific cation Piezo channel required for rapidly adapting mechanically activated (MA) currents and has a key role in sensing touch and tactile pain. Piezo channels are homotrimeric three-blade propeller-shaped structures that utilize a cap-motion and plug-and-latch mechanism to gate their ion-conducting pathways. Generates currents characterized by a linear current-voltage relationship that are sensitive to ruthenium red and gadolinium. Conductance to monovalent alkali ions is highest for K(+), intermediate for Na(+) and lowest for Li(+). Divalent ions except for Mn(2+) permeate the channel but more slowly than the monovalent ions and they also reduce K(+) currents. Plays a key role in epithelial cell adhesion by maintaining integrin activation through R-Ras recruitment to the ER, most probably in its activated state, and subsequent stimulation of calpain signaling. In inner ear hair cells, PIEZO1/2 subunits may constitute part of the mechanotransducer (MET) non-selective cation channel complex where they may act as pore-forming ion-conducting component in the complex. In the kidney, may contribute to the detection of intraluminal pressure changes and to urine flow sensing. Acts as a shear-stress sensor that promotes endothelial cell organization and alignment in the direction of blood flow through calpain activation. Plays a key role in blood vessel formation and vascular structure in both development and adult physiology. Acts as a sensor of phosphatidylserine (PS) flipping at the plasma membrane and governs morphogenesis of muscle cells. In myoblasts, flippase-mediated PS enrichment at the inner leaflet of plasma membrane triggers channel activation and Ca2+ influx followed by Rho GTPases signal transduction, leading to assembly of cortical actomyosin fibers and myotube formation. The polypeptide is Piezo-type mechanosensitive ion channel component 1 (Homo sapiens (Human)).